A 585-amino-acid polypeptide reads, in one-letter code: Arginine--tRNA ligase (585 aa).

Residues 131-141 (ANPTGPMHVGH) carry the 'HIGH' region motif.

The protein belongs to the class-I aminoacyl-tRNA synthetase family. In terms of assembly, monomer.

It is found in the cytoplasm. The catalysed reaction is tRNA(Arg) + L-arginine + ATP = L-arginyl-tRNA(Arg) + AMP + diphosphate. This is Arginine--tRNA ligase from Bartonella henselae (strain ATCC 49882 / DSM 28221 / CCUG 30454 / Houston 1) (Rochalimaea henselae).